The primary structure comprises 588 residues: Outer membrane transporter CdiB (588 aa).

A helical transmembrane segment spans residues 33–55 (VVRYFSLLPCLCILSFSSPAAML). The POTRA domain maps to 104 to 179 (FTVSRIVVSG…GVLHITVMEG (76 aa)).

It belongs to the TPS (TC 1.B.20) family.

The protein localises to the cell outer membrane. In terms of biological role, potential outer membrane protein component of a toxin-immunity protein module, which functions as a cellular contact-dependent growth inhibition (CDI) system. CDI modules allow bacteria to communicate with and inhibit the growth of closely related neighboring bacteria in a contact-dependent fashion. This protein may be required for secretion and assembly of the CdiA toxin protein. Probable member of a two partner secretion pathway (TPS) in which it mediates the secretion of CdiA. This chain is Outer membrane transporter CdiB, found in Escherichia coli O6:K15:H31 (strain 536 / UPEC).